The following is a 570-amino-acid chain: Sulfite reductase [NADPH] hemoprotein beta-component (570 aa).

Residues Cys434, Cys440, Cys479, and Cys483 each contribute to the [4Fe-4S] cluster site. Cys483 serves as a coordination point for siroheme.

This sequence belongs to the nitrite and sulfite reductase 4Fe-4S domain family. In terms of assembly, alpha(8)-beta(8). The alpha component is a flavoprotein, the beta component is a hemoprotein. The cofactor is siroheme. It depends on [4Fe-4S] cluster as a cofactor.

The enzyme catalyses hydrogen sulfide + 3 NADP(+) + 3 H2O = sulfite + 3 NADPH + 4 H(+). Its pathway is sulfur metabolism; hydrogen sulfide biosynthesis; hydrogen sulfide from sulfite (NADPH route): step 1/1. Functionally, component of the sulfite reductase complex that catalyzes the 6-electron reduction of sulfite to sulfide. This is one of several activities required for the biosynthesis of L-cysteine from sulfate. The sequence is that of Sulfite reductase [NADPH] hemoprotein beta-component from Escherichia coli O7:K1 (strain IAI39 / ExPEC).